The primary structure comprises 479 residues: MEKKQKVVVVGAGPVGSLAALYAANRGDDVEIYELRSDLRDPTTTPLNFTKSINLALSERGINAMRHAGQPKLIEHVMGATIPMHGRMIHGKRANGDLFEESQNYDVYGRSILAVDRGRLNERLLDILEAMPNVTFFFNHKLTGADFRKNKAWFEVRDKTGAAQGQQSREIEVKFDLMIGTDGAHSAVRYHMMKYTRMDYEQVYIDTMWCEFQIQPKTVVPDAPLDSKFSISPNHLHIWPGKEFMFIAIPSDDGSFTCTLFAPATLYEHLESDRTGSLVPPFFDKYFPGVTTLIPPTELIDSFHRNPHLPLISIKCKPHHYGSSVVILGDAAHAMVPFYGQGMNAGLEDVRILFDILDKHARMDELSACADRAVSREHALAEYTAVRVPDAHAINDLALQNYVEMRASVLSPVYRLRKFLEEALSKYVPSLGWQTKYARVSFGNERYSEVVAKSEHQGKMLVRGIGILSCRVGRALHNE.

The protein belongs to the aromatic-ring hydroxylase family. KMO subfamily. It depends on FAD as a cofactor.

It is found in the mitochondrion outer membrane. It catalyses the reaction L-kynurenine + NADPH + O2 + H(+) = 3-hydroxy-L-kynurenine + NADP(+) + H2O. It functions in the pathway cofactor biosynthesis; NAD(+) biosynthesis; quinolinate from L-kynurenine: step 1/3. Its function is as follows. Catalyzes the hydroxylation of L-kynurenine (L-Kyn) to form 3-hydroxy-L-kynurenine (L-3OHKyn). Required for synthesis of quinolinic acid. The chain is Kynurenine 3-monooxygenase from Chaetomium globosum (strain ATCC 6205 / CBS 148.51 / DSM 1962 / NBRC 6347 / NRRL 1970) (Soil fungus).